A 569-amino-acid polypeptide reads, in one-letter code: CTP synthase (569 aa).

Residues 1-272 (MARPKNVKHI…DSRVLKKLGI (272 aa)) are amidoligase domain. A CTP-binding site is contributed by Ser-18. Position 18 (Ser-18) interacts with UTP. 19 to 24 (SLGKGI) provides a ligand contact to ATP. L-glutamine is bound at residue Tyr-59. Asp-76 is a binding site for ATP. Mg(2+)-binding residues include Asp-76 and Glu-146. Residues 153-155 (DIE), 193-198 (KTKPTQ), and Lys-229 each bind CTP. UTP contacts are provided by residues 193–198 (KTKPTQ) and Lys-229. The Glutamine amidotransferase type-1 domain maps to 299–543 (TIGICGKYTE…VAAAKDYARG (245 aa)). Gly-363 lines the L-glutamine pocket. The active-site Nucleophile; for glutamine hydrolysis is the Cys-390. L-glutamine is bound by residues 391–394 (LGMQ), Glu-414, and Arg-471. Residues His-516 and Glu-518 contribute to the active site.

This sequence belongs to the CTP synthase family. As to quaternary structure, homotetramer.

The catalysed reaction is UTP + L-glutamine + ATP + H2O = CTP + L-glutamate + ADP + phosphate + 2 H(+). The enzyme catalyses L-glutamine + H2O = L-glutamate + NH4(+). It carries out the reaction UTP + NH4(+) + ATP = CTP + ADP + phosphate + 2 H(+). Its pathway is pyrimidine metabolism; CTP biosynthesis via de novo pathway; CTP from UDP: step 2/2. Allosterically activated by GTP, when glutamine is the substrate; GTP has no effect on the reaction when ammonia is the substrate. The allosteric effector GTP functions by stabilizing the protein conformation that binds the tetrahedral intermediate(s) formed during glutamine hydrolysis. Inhibited by the product CTP, via allosteric rather than competitive inhibition. Catalyzes the ATP-dependent amination of UTP to CTP with either L-glutamine or ammonia as the source of nitrogen. Regulates intracellular CTP levels through interactions with the four ribonucleotide triphosphates. This chain is CTP synthase, found in Chlorobium chlorochromatii (strain CaD3).